The primary structure comprises 290 residues: Type II secretion system protein C (290 aa).

The Cytoplasmic segment spans residues 1–28 (MTLPFRDDLLSSLLARCKTVPLSRFSQP). A helical membrane pass occupies residues 29–46 (LFWLLLLLLAHQCAGLTW). Topologically, residues 47 to 290 (RLLDLGSQQS…LYDVYVGLSE (244 aa)) are periplasmic.

It belongs to the GSP C family.

It localises to the cell inner membrane. Functionally, involved in a type II secretion system (T2SS, formerly general secretion pathway, GSP) for the export of proteins. The sequence is that of Type II secretion system protein C (exeC) from Aeromonas salmonicida.